Here is a 765-residue protein sequence, read N- to C-terminus: 1,4-alpha-glucan branching enzyme GlgB (765 aa).

The active-site Nucleophile is the Asp431. Glu484 functions as the Proton donor in the catalytic mechanism.

Belongs to the glycosyl hydrolase 13 family. GlgB subfamily. As to quaternary structure, monomer.

The enzyme catalyses Transfers a segment of a (1-&gt;4)-alpha-D-glucan chain to a primary hydroxy group in a similar glucan chain.. The protein operates within glycan biosynthesis; glycogen biosynthesis. Catalyzes the formation of the alpha-1,6-glucosidic linkages in glycogen by scission of a 1,4-alpha-linked oligosaccharide from growing alpha-1,4-glucan chains and the subsequent attachment of the oligosaccharide to the alpha-1,6 position. The chain is 1,4-alpha-glucan branching enzyme GlgB from Synechococcus sp. (strain CC9311).